We begin with the raw amino-acid sequence, 122 residues long: NADH-quinone oxidoreductase subunit A (122 aa).

Transmembrane regions (helical) follow at residues 10-30 (MIVLIFLLLGILLPVVALTLG), 66-86 (IFALLFVIFDVETLFLYPWAV), and 91-111 (LGLFALIEMLIFVVMLLVGLA).

This sequence belongs to the complex I subunit 3 family. In terms of assembly, NDH-1 is composed of 14 different subunits. Subunits NuoA, H, J, K, L, M, N constitute the membrane sector of the complex.

The protein localises to the cell membrane. The catalysed reaction is a quinone + NADH + 5 H(+)(in) = a quinol + NAD(+) + 4 H(+)(out). In terms of biological role, NDH-1 shuttles electrons from NADH, via FMN and iron-sulfur (Fe-S) centers, to quinones in the respiratory chain. The immediate electron acceptor for the enzyme in this species is believed to be a menaquinone. Couples the redox reaction to proton translocation (for every two electrons transferred, four hydrogen ions are translocated across the cytoplasmic membrane), and thus conserves the redox energy in a proton gradient. This Bacillus thuringiensis subsp. konkukian (strain 97-27) protein is NADH-quinone oxidoreductase subunit A.